The sequence spans 57 residues: MIQSPTSFLIVLILLWCKLVLSCFREFIIALQQLIQVLLQIINSNLQSRLTLWHSLD.

The N-terminal stretch at 1–23 (MIQSPTSFLIVLILLWCKLVLSC) is a signal peptide.

In terms of biological role, involved in resistance to IFN. This Avian infectious bronchitis virus (strain Beaudette) (IBV) protein is Non-structural protein 3a.